Consider the following 147-residue polypeptide: Large ribosomal subunit protein bL9 (147 aa).

The protein belongs to the bacterial ribosomal protein bL9 family.

Functionally, binds to the 23S rRNA. This is Large ribosomal subunit protein bL9 from Helicobacter hepaticus (strain ATCC 51449 / 3B1).